The chain runs to 284 residues: N-methyltransferase sirN (284 aa).

It belongs to the methyltransferase superfamily. LaeA methyltransferase family.

Its pathway is mycotoxin biosynthesis. N-methyltransferase; part of the gene cluster that mediates the biosynthesis of sirodesmin PL, an epipolythiodioxopiperazine (ETP) characterized by a disulfide bridged cyclic dipeptide and that acts as a phytotoxin which is involved in the blackleg didease of canola. SirD catalyzes the O-prenylation of L-tyrosine (L-Tyr) in the presence of dimethylallyl diphosphate (DMAPP) to yield 4-O-dimethylallyl-L-Tyr, and therefore represents probably the first pathway-specific enzyme in the biosynthesis of sirodesmin PL. 4-O-dimethylallyl-L-Tyr, then undergoes condensation with L-Ser in a reaction catalyzed by the non-ribosomal peptide synthase sirP to form the diketopiperazine (DKP) backbone. Further bishydroxylation of the DKP performed by the cytochrome P450 monooxygenase sirC leads to the production of the intermediate phomamide. This step is essential to form the reactive thiol group required for toxicity of sirodesmin PL. The next steps of sirodesmin biosynthesis are not well understood yet but some predictions could be made from intermediate compounds identification. Phomamide is converted into phomalizarine via oxidation, probably by sirT. Further oxidation, methylation (by sirM or sirN) and reduction steps convert phomalizarine to deacetyl sirodesmin. Finally, acetyltransferase sirH probably acetylates deacetyl sirodesmin to produce sirodesmin PL. The sequence is that of N-methyltransferase sirN from Leptosphaeria maculans (Blackleg fungus).